The chain runs to 198 residues: Putative pseudouridine methyltransferase (198 aa).

Residues Leu-132 and Cys-186 each coordinate S-adenosyl-L-methionine.

The protein belongs to the methyltransferase superfamily. TrmY family.

It is found in the cytoplasm. In Vibrio vulnificus (strain CMCP6), this protein is Putative pseudouridine methyltransferase.